The primary structure comprises 89 residues: Protein S100-A8 (89 aa).

EF-hand domains follow at residues 13-48 (IDVYHNYSNIQGNHHALYKNDFKKMVTTECPQFVQN) and 46-81 (VQNINIENLFRELDINSDNAINFEEFLAMVIKVGVA). Zn(2+)-binding residues include His-17 and His-27. Asp-33 provides a ligand contact to Ca(2+). S-nitrosocysteine is present on Cys-42. The Ca(2+) site is built by Asp-59, Asn-61, Asp-63, and Glu-70. His-83 contributes to the Zn(2+) binding site.

It belongs to the S-100 family. In terms of assembly, homodimer. Preferentially exists as a heterodimer or heterotetramer with S100A9 known as calprotectin (S100A8/A9). Calprotectin (S100A8/9) interacts with CEACAM3 and tubulin filaments in a calcium-dependent manner. Heterotetrameric calprotectin (S100A8/A9) interacts with ANXA6 and associates with tubulin filaments in activated monocytes. S100A8 and calprotectin (S100A8/9) interact with NCF2/P67PHOX, RAC1 and RAC2. Calprotectin (S100A8/9) interacts with CYBA and CYBB. S100A8 interacts with AGER, ATP2A2 and with the heterodimeric complex formed by TLR4 and LY96. Calprotectin (S100A8/9) interacts with NOS2 to form the iNOS-S100A8/A9 transnitrosylase complex. Calprotectin (S100A8/9) interacts with CD69.

It localises to the secreted. The protein resides in the cytoplasm. The protein localises to the cytoskeleton. It is found in the cell membrane. Calprotectin (S100A8/A9) activity on TLR4 signaling is inhibited by paquinimod. Its function is as follows. S100A8 is a calcium- and zinc-binding protein which plays a prominent role in the regulation of inflammatory processes and immune response. It can induce neutrophil chemotaxis and adhesion. Predominantly found as calprotectin (S100A8/A9) which has a wide plethora of intra- and extracellular functions. The intracellular functions include: facilitating leukocyte arachidonic acid trafficking and metabolism, modulation of the tubulin-dependent cytoskeleton during migration of phagocytes and activation of the neutrophilic NADPH-oxidase. Also participates in regulatory T-cell differentiation together with CD69. Activates NADPH-oxidase by facilitating the enzyme complex assembly at the cell membrane, transferring arachidonic acid, an essential cofactor, to the enzyme complex and S100A8 contributes to the enzyme assembly by directly binding to NCF2/P67PHOX. The extracellular functions involve pro-inflammatory, antimicrobial, oxidant-scavenging and apoptosis-inducing activities. Its pro-inflammatory activity includes recruitment of leukocytes, promotion of cytokine and chemokine production, and regulation of leukocyte adhesion and migration. Acts as an alarmin or a danger associated molecular pattern (DAMP) molecule and stimulates innate immune cells via binding to pattern recognition receptors such as Toll-like receptor 4 (TLR4) and receptor for advanced glycation endproducts (AGER). Binding to TLR4 and AGER activates the MAP-kinase and NF-kappa-B signaling pathways resulting in the amplification of the pro-inflammatory cascade. Has antimicrobial activity towards bacteria and fungi and exerts its antimicrobial activity probably via chelation of Zn(2+) which is essential for microbial growth. Can induce cell death via autophagy and apoptosis and this occurs through the cross-talk of mitochondria and lysosomes via reactive oxygen species (ROS) and the process involves BNIP3. Can regulate neutrophil number and apoptosis by an anti-apoptotic effect; regulates cell survival via ITGAM/ITGB and TLR4 and a signaling mechanism involving MEK-ERK. Its role as an oxidant scavenger has a protective role in preventing exaggerated tissue damage by scavenging oxidants. The iNOS-S100A8/A9 transnitrosylase complex is proposed to direct selective inflammatory stimulus-dependent S-nitrosylation of multiple targets such as GAPDH, ANXA5, EZR, MSN and VIM by recognizing a [IL]-x-C-x-x-[DE] motif; S100A8 seems to contribute to S-nitrosylation site selectivity. In terms of biological role, (Microbial infection) Upon infection by murine coronavirus (MHV-A59), induces expansion of aberrant immature neutrophils in a TLR4-dependent manner. This chain is Protein S100-A8, found in Mus musculus (Mouse).